Here is a 929-residue protein sequence, read N- to C-terminus: Protein transport protein Sec16B (929 aa).

Positions 1–10 are enriched in pro residues; sequence MEPWDPPQLP. A disordered region spans residues 1 to 64; the sequence is MEPWDPPQLP…RPASQAESYE (64 aa). Positions 228–669 are central conserved domain (CCD); required for localization to endoplasmic reticulum exit sites; the sequence is APHKFLQPHV…LRTYCQHCQV (442 aa). Disordered regions lie at residues 675 to 727 and 781 to 929; these read PEVA…QDVS and LSTR…PNPL. Positions 694–710 are enriched in basic and acidic residues; sequence EMVHEQPHSDGPHDEQW. The span at 781-795 shows a compositional bias: low complexity; the sequence is LSTRARSASESSTAS. The segment covering 838-848 has biased composition (polar residues); that stretch reads PKATTSGSPTP. Positions 856 to 871 are enriched in pro residues; it reads PSPPGAVPSAQPPASP.

Belongs to the SEC16 family. As to quaternary structure, SEC16A and SEC16B are each present in multiple copies in a heteromeric complex.

The protein resides in the endoplasmic reticulum membrane. The protein localises to the golgi apparatus membrane. Its function is as follows. Plays a role in the organization of the endoplasmic reticulum exit sites (ERES), also known as transitional endoplasmic reticulum (tER). Required for secretory cargo traffic from the endoplasmic reticulum to the Golgi apparatus. Involved in peroxisome biogenesis. Regulates the transport of peroxisomal biogenesis factors PEX3 and PEX16 from the ER to peroxisomes. The polypeptide is Protein transport protein Sec16B (SEC16B) (Gallus gallus (Chicken)).